The primary structure comprises 253 residues: MDDSSLQKVELQTDVYMVCLQHALSTENFEVMGLLIGNFACGIAKISAVIILRRLDKKKDRVEISSEQLLKAAAEAERLTVELNRPMRVLGWYHSHPHITVCPSHVDVRTQATYQTMDHSFVGLIFSVFSEGKESKEHEIFLNCFQSDNGEATEIPLEIVHTPDISDRCLRTMTDLSKILVQEEEDMAEACKDHPDVLASIHNNAVRTRALIHITDIITKPLVQTFEKRIALNKLRATHLQRQLQELQKMCNG.

An MPN domain is found at 9 to 145 (VELQTDVYMV…KEHEIFLNCF (137 aa)). Residues histidine 94, histidine 96, and aspartate 107 each coordinate Zn(2+). The JAMM motif signature appears at 94 to 107 (HSHPHITVCPSHVD). Residues 227–249 (EKRIALNKLRATHLQRQLQELQK) adopt a coiled-coil conformation.

This sequence belongs to the peptidase M67A family. BRCC36 subfamily. Component of the BRISC complex, at least composed of ABRAXAS2, BRCC3/BRCC36, BABAM2 and BABAM1/NBA1. Within the complex, interacts directly with ABRAXAS2. The heterodimer with ABRAXAS2 assembles into a heterotetramer. The BRISC complex binds polyubiquitin. It depends on Zn(2+) as a cofactor.

The protein resides in the cytoplasm. Its subcellular location is the nucleus. The protein localises to the cytoskeleton. It localises to the spindle pole. Its function is as follows. Metalloprotease that specifically cleaves 'Lys-63'-linked polyubiquitin chains, leaving the last ubiquitin chain attached to its substrates. Catalytic subunit of the BRISC complex; does not have activity by itself, but needs to be associated into a heterotetramer with ABRAXAS2 for minimal in vitro activity. Plays a role in regulating the onset of apoptosis via its role in modulating 'Lys-63'-linked ubiquitination of target proteins. Required for normal mitotic spindle assembly and microtubule attachment to kinetochores via its role in deubiquitinating spindle assembly factors. This chain is Lys-63-specific deubiquitinase BRCC36, found in Camponotus floridanus (Florida carpenter ant).